The primary structure comprises 111 residues: Large ribosomal subunit protein uL23 (111 aa).

Belongs to the universal ribosomal protein uL23 family. Part of the 50S ribosomal subunit. Contacts protein L29, and trigger factor when it is bound to the ribosome.

In terms of biological role, one of the early assembly proteins it binds 23S rRNA. One of the proteins that surrounds the polypeptide exit tunnel on the outside of the ribosome. Forms the main docking site for trigger factor binding to the ribosome. The sequence is that of Large ribosomal subunit protein uL23 from Chlamydia muridarum (strain MoPn / Nigg).